We begin with the raw amino-acid sequence, 175 residues long: Co-chaperone protein HscB homolog (175 aa).

The 73-residue stretch at S7–L79 folds into the J domain.

Belongs to the HscB family. Interacts with HscA and stimulates its ATPase activity.

In terms of biological role, co-chaperone involved in the maturation of iron-sulfur cluster-containing proteins. Seems to help targeting proteins to be folded toward HscA. The sequence is that of Co-chaperone protein HscB homolog from Paraburkholderia phytofirmans (strain DSM 17436 / LMG 22146 / PsJN) (Burkholderia phytofirmans).